Here is a 196-residue protein sequence, read N- to C-terminus: Transmembrane protein 126A (196 aa).

Over 1-34 (MESHKPSTNKDDLIFNIIPRKIKQLPESDRNLLE) the chain is Mitochondrial matrix. The chain crosses the membrane as a helical span at residues 35–55 (YGSAYIGLNAAFGGLIANSLF). The Mitochondrial intermembrane segment spans residues 56-57 (RR). A helical transmembrane segment spans residues 58-78 (ILNVTQARVASSLPMAVIPFL). At 79–106 (TANLSYHSFVSLPLSTGNLNCEICTTTR) the chain is on the mitochondrial matrix side. The helical transmembrane segment at 107–127 (GTLVGFVLGGLYPILLAIPVN) threads the bilayer. Residues 128–159 (GGLAARYESSPLPQRGNIFNYWITISKPVFRK) are Mitochondrial intermembrane-facing. Residues 160-176 (MLFPTLLQTAFAAYLGS) form a helical membrane-spanning segment. Topologically, residues 177 to 196 (RQYKLLIKALQLPEPDLEIQ) are mitochondrial matrix.

Belongs to the TMEM126 family. In terms of assembly, interacts with OXA1L; promoting cotranslational quality control in mitochondria.

It localises to the mitochondrion inner membrane. Its function is as follows. Protein required for the cotranslational protein quality control in the inner membrane of the mitochondria. Associates with newly synthesized polypeptides and may act as a chaperone that cooperates with OXA1L for the insertion of newly synthesized mitochondrial proteins into the inner membrane. Required for the assembly of the ND4 module of mitochondrial complex I. This Rattus norvegicus (Rat) protein is Transmembrane protein 126A (Tmem126a).